A 307-amino-acid chain; its full sequence is Olfactory receptor 5AC1 (307 aa).

The Extracellular portion of the chain corresponds to 1-28 (MAEENKILVTHFVLTGLTDHPGLQAPLF). Residues 29-49 (LVFLVIYLITLVGNLGLMALI) form a helical membrane-spanning segment. The Cytoplasmic portion of the chain corresponds to 50–56 (WKDPHLH). A helical membrane pass occupies residues 57 to 77 (TPIYLFLGSLAFADACTSSSV). Over 78 to 99 (TSKMLINFLSKNHMLSMAKCAT) the chain is Extracellular. Cys97 and Cys179 are oxidised to a cystine. The chain crosses the membrane as a helical span at residues 100-120 (QFYFFGSNATTECFLLVVMAY). At 121–143 (DRYVAICNPLLYPVVMSNSLCTQ) the chain is on the cytoplasmic side. A helical membrane pass occupies residues 144-164 (FIGISYFIGFLHSAIHVGLLF). The Extracellular segment spans residues 165–195 (RLTFCRSNIIHYFYCEILQLFKISCTNPTVN). A helical membrane pass occupies residues 196–216 (ILLIFIFSAFIQVFTFMTLIV). At 217-239 (SYSYILSAILKKKSEKGRSKAFS) the chain is on the cytoplasmic side. A helical transmembrane segment spans residues 240-260 (TCSAHLLSVSLFYGTLFFMYV). Residues 261–271 (SSRSGSAADQA) lie on the Extracellular side of the membrane. Residues 272–292 (KMYSLFYTIIIPLLNPFIYSL) form a helical membrane-spanning segment. At 293–307 (RNKEVIDALRRIMKK) the chain is on the cytoplasmic side.

This sequence belongs to the G-protein coupled receptor 1 family.

It is found in the cell membrane. Odorant receptor. The chain is Olfactory receptor 5AC1 (OR5AC1) from Homo sapiens (Human).